Consider the following 1413-residue polypeptide: Leucine-rich repeat receptor protein kinase MSL1 (1413 aa).

A signal peptide spans 1-23; that stretch reads MAPMLSIASRSPSPALIAPHASA. N-linked (GlcNAc...) asparagine glycosylation is found at Asn-153 and Asn-192. 29 LRR repeats span residues 185–209, 210–233, 235–257, 258–281, 282–304, 306–329, 330–353, 354–377, 379–401, 402–425, 427–449, 450–473, 475–497, 498–518, 519–542, 543–565, 567–589, 590–613, 615–636, 637–661, 662–685, 687–709, 710–733, 745–769, 771–793, 794–817, 818–841, 843–866, and 868–890; these read FQSL…MVNL, QHLQ…LFDL, MLKV…IAHL, QQLT…LGSL, KNLE…SFSN, SRLL…IRAL, VNLV…LCQL, KNLQ…IGNL, QLEV…IGNL, EILE…VGEL, NLRQ…LGNC, KKLT…LADL, AVVL…IQNW, SNVS…PGLP, LHLV…ICQG, TFLQ…TFKG, KNLT…YLAL, LPLV…LWES, TILD…SIGK, LLSL…IGAL, RNLT…LFNC, NLVT…ISHL, TKLN…LCVA, VQHI…INNC, ILVE…LAEL, RNIT…PVPL, ASLQ…IGNI, PQIT…LLCK, and SLNH…CHED. N-linked (GlcNAc...) asparagine glycosylation is found at Asn-304 and Asn-317. Asn-461, Asn-496, and Asn-499 each carry an N-linked (GlcNAc...) asparagine glycan. 3 N-linked (GlcNAc...) asparagine glycosylation sites follow: Asn-554, Asn-568, and Asn-601. 2 N-linked (GlcNAc...) asparagine glycosylation sites follow: Asn-663 and Asn-697. An N-linked (GlcNAc...) asparagine glycan is attached at Asn-768. The N-linked (GlcNAc...) asparagine glycan is linked to Asn-795. 4 N-linked (GlcNAc...) asparagine glycosylation sites follow: Asn-878, Asn-901, Asn-917, and Asn-928. LRR repeat units lie at residues 918 to 942 and 944 to 966; these read FTKL…IARV and SLYY…ICGM. Asn-973 is a glycosylation site (N-linked (GlcNAc...) asparagine). Residues 1016-1036 form a helical membrane-spanning segment; it reads TICCIATAIVIVLVVILVVYL. The Protein kinase domain occupies 1107–1401; sequence FDGMHVVGDG…IEAMEYGPLV (295 aa). Residues 1113–1121 and Lys-1135 each bind ATP; that span reads VGDGGFGTV. Asp-1234 acts as the Proton acceptor in catalysis.

It belongs to the protein kinase superfamily. Ser/Thr protein kinase family. As to expression, expressed in roots, leaves, shoots and spikelets.

It localises to the cell membrane. It catalyses the reaction L-seryl-[protein] + ATP = O-phospho-L-seryl-[protein] + ADP + H(+). The enzyme catalyses L-threonyl-[protein] + ATP = O-phospho-L-threonyl-[protein] + ADP + H(+). In terms of biological role, receptor-like kinase that may play a role male and female sporogenesis. The sequence is that of Leucine-rich repeat receptor protein kinase MSL1 from Oryza sativa subsp. japonica (Rice).